The primary structure comprises 673 residues: Putative transcription factor tau subunit sfc9 (673 aa).

In terms of assembly, may be a component of the TFIIIC complex.

It is found in the nucleus. The chain is Putative transcription factor tau subunit sfc9 from Schizosaccharomyces pombe (strain 972 / ATCC 24843) (Fission yeast).